The primary structure comprises 937 residues: Isoleucine--tRNA ligase (937 aa).

Residues 57 to 67 (PYANGPIHMGH) carry the 'HIGH' region motif. Glu-556 serves as a coordination point for L-isoleucyl-5'-AMP. The 'KMSKS' region signature appears at 597-601 (KMSKS). Position 600 (Lys-600) interacts with ATP. Residues Cys-895, Cys-898, Cys-915, and Cys-918 each contribute to the Zn(2+) site.

This sequence belongs to the class-I aminoacyl-tRNA synthetase family. IleS type 1 subfamily. Monomer. Requires Zn(2+) as cofactor.

It localises to the cytoplasm. It carries out the reaction tRNA(Ile) + L-isoleucine + ATP = L-isoleucyl-tRNA(Ile) + AMP + diphosphate. Its function is as follows. Catalyzes the attachment of isoleucine to tRNA(Ile). As IleRS can inadvertently accommodate and process structurally similar amino acids such as valine, to avoid such errors it has two additional distinct tRNA(Ile)-dependent editing activities. One activity is designated as 'pretransfer' editing and involves the hydrolysis of activated Val-AMP. The other activity is designated 'posttransfer' editing and involves deacylation of mischarged Val-tRNA(Ile). The sequence is that of Isoleucine--tRNA ligase from Levilactobacillus brevis (strain ATCC 367 / BCRC 12310 / CIP 105137 / JCM 1170 / LMG 11437 / NCIMB 947 / NCTC 947) (Lactobacillus brevis).